The sequence spans 299 residues: 11-beta-hydroxysteroid dehydrogenase-like 4A (299 aa).

The chain crosses the membrane as a helical; Signal-anchor for type II membrane protein span at residues 10–30 (ILLPIVTVSFLLVFMPFSIFF). NADP(+)-binding positions include 54-80 (GSSSGIGEHLAYEYARRGAYLTLVARR) and aspartate 105. Serine 184 contacts substrate. Tyrosine 197 acts as the Proton acceptor in catalysis. NADP(+) is bound by residues 197-201 (YAASK) and lysine 201.

The protein belongs to the short-chain dehydrogenases/reductases (SDR) family.

It is found in the membrane. This is 11-beta-hydroxysteroid dehydrogenase-like 4A (HSD4) from Arabidopsis thaliana (Mouse-ear cress).